The chain runs to 251 residues: Tyrosine phosphatase-like protein J3 (251 aa).

Positions 26-251 constitute a Tyrosine-protein phosphatase domain; the sequence is IADEYYTIVP…PVLQNSKRRE (226 aa).

The protein belongs to the protein-tyrosine phosphatase family.

In Microplitis demolitor (Parasitoid wasp), this protein is Tyrosine phosphatase-like protein J3 (J4).